Here is a 303-residue protein sequence, read N- to C-terminus: Phytochrome-associated serine/threonine-protein phosphatase 1 (303 aa).

Residues Asp50, His52, Asp78, and Asn110 each contribute to the Zn(2+) site. His111 functions as the Proton donor in the catalytic mechanism. Positions 160 and 234 each coordinate Zn(2+).

This sequence belongs to the PPP phosphatase family. PP-6 (PP-V) subfamily. As to quaternary structure, interacts with PHYA and PHYB, mostly when they are phosphorylated and in Pfr forms. Interacts with TAP46. Interacts with PIN1 and PIN2. Interacts with ABI5. Interacts with PIF3 and PIF4. Protein phosphatase 6 (PP6) holoenzyme is a heterotrimeric complex formed by the catalytic subunit FYPP, a SAPS domain-containing subunit (SAL) and a protein phosphatase 2A regulatory subunit A (PP2AA). Requires Zn(2+) as cofactor. In terms of tissue distribution, mostly expressed in flowers. Also detected to a lower extent in stems and leaves. Expressed in roots.

Its subcellular location is the cytoplasm. The catalysed reaction is O-phospho-L-seryl-[protein] + H2O = L-seryl-[protein] + phosphate. The enzyme catalyses O-phospho-L-threonyl-[protein] + H2O = L-threonyl-[protein] + phosphate. Catalytic subunit of protein phosphatase 6 (PP6). Dephosphorylates phosphorylated phytochromes, with a preference toward Pfr forms. Plays a major role in the photoperiodic control of flowering time in long days by modulating phytochrome signals in flowering time control. Involved in the regulation of polar auxin transport in roots. Dephosphorylates directly the auxin efflux carriers PIN1 and PIN2, thus promoting their proper polar localization in root cell plasma membrane. Acts antagonistically with the protein kinase PID to regulate the reversible phosphorylation of PIN and polar targeting, subsequently impacting polar auxin transport and plant development. Involved in the regulation of abscisic acid (ABA) signaling during seed germination and postgermination seedling growth. Functions as a negative regulator of ABA signaling through direct dephosphorylation and destabilization of ABI5. Acts antagonistically with the protein kinase SRK2E/SNRK2.6 to regulate ABI5 phosphorylation and ABA responses. Involved in the regulation of phosphorylation status in hypocotyl phototropism. Involved in the negative regulation of photomorphogenesis by controlling the stability and transcriptional activity of PIF3 and PIF4 proteins in the dark, via the regulation of their phosphorylation status. This chain is Phytochrome-associated serine/threonine-protein phosphatase 1, found in Arabidopsis thaliana (Mouse-ear cress).